A 97-amino-acid chain; its full sequence is Defensin-like protein 196 (97 aa).

The first 28 residues, Met1–Ala28, serve as a signal peptide directing secretion. 4 disulfide bridges follow: Cys33-Cys85, Cys46-Cys70, Cys55-Cys80, and Cys59-Cys82.

It belongs to the DEFL family. Protease inhibitor I18 (RTI/MTI-2) subfamily.

It is found in the secreted. The sequence is that of Defensin-like protein 196 (ATTI4) from Arabidopsis thaliana (Mouse-ear cress).